The following is a 130-amino-acid chain: Small ribosomal subunit protein eS17 (130 aa).

The span at 74-84 (QEEERERRDNY) shows a compositional bias: basic and acidic residues. A disordered region spans residues 74–97 (QEEERERRDNYMPEISTVDPSQLT).

The protein belongs to the eukaryotic ribosomal protein eS17 family.

In Caenorhabditis elegans, this protein is Small ribosomal subunit protein eS17 (rps-17).